A 326-amino-acid polypeptide reads, in one-letter code: Acyl-CoA-binding domain-containing protein 4 (326 aa).

One can recognise an ACB domain in the interval 10-99; the sequence is CQKQFQAAVS…MKLVAQKVID (90 aa). An acyl-CoA contacts are provided by residues 21–30, 41–45, Lys-67, and Tyr-86; these read IQNLPKNGSY and YSYYK. Disordered regions lie at residues 147-170 and 223-248; these read VQAA…SRLP and KEAA…SLMG. At Ser-164 the chain carries Phosphoserine.

Its function is as follows. Binds medium- and long-chain acyl-CoA esters and may function as an intracellular carrier of acyl-CoA esters. This is Acyl-CoA-binding domain-containing protein 4 (Acbd4) from Rattus norvegicus (Rat).